Consider the following 223-residue polypeptide: Mitochondrial cardiolipin hydrolase (223 aa).

The Mitochondrial intermembrane segment spans residues 1–6; sequence MGCASS. The helical transmembrane segment at 7–24 threads the bilayer; sequence KEEVALTPLSDVNAAKEV. Residues 25–223 lie on the Cytoplasmic side of the membrane; it reads ADLKAQVDQL…QFDKLWDMFK (199 aa). In terms of domain architecture, PLD phosphodiesterase spans 164 to 191; sequence TAAHMHHKFAIIDGRLLLNGSFNWTRQA. Residues His169, Lys171, and Asp176 contribute to the active site.

It belongs to the phospholipase D family. MitoPLD/Zucchini subfamily. Homodimer.

It is found in the mitochondrion outer membrane. Plays a critical role in PIWI-interacting RNA (piRNA) biogenesis. piRNAs provide essential protection against the activity of mobile genetic elements. piRNA-mediated transposon silencing is thus critical for maintaining genome stability. Backbone-non-specific, single strand-specific nuclease, cleaving either RNA or DNA substrates with similar affinity. Produces 5' phosphate and 3' hydroxyl termini, suggesting it could directly participate in the processing of primary piRNA transcripts. Has been proposed to act as a cardiolipin hydrolase to generate phosphatidic acid at mitochondrial surface. Although it cannot be excluded that it can act as a phospholipase in some circumstances, this activity could not be confirmed. The protein is Mitochondrial cardiolipin hydrolase of Chlamydomonas reinhardtii (Chlamydomonas smithii).